We begin with the raw amino-acid sequence, 1006 residues long: Phosphatidylinositol 4,5-bisphosphate 5-phosphatase A (1006 aa).

The disordered stretch occupies residues 1-416 (MEGQSSRGSR…SSSPWSAQPT (416 aa)). Residues 27–41 (VAQTGAPSKVDSSFQ) are compositionally biased toward polar residues. The residue at position 56 (arginine 56) is an Asymmetric dimethylarginine; alternate. Arginine 56 bears the Omega-N-methylarginine; alternate mark. At arginine 65 the chain carries Omega-N-methylarginine. Arginine 76 is subject to Asymmetric dimethylarginine. Arginine 83 bears the Asymmetric dimethylarginine; alternate mark. Arginine 83 bears the Omega-N-methylarginine; alternate mark. Residues 94–112 (GQKTATAHRSSSLAPTSVG) show a composition bias toward polar residues. The RSXSXX motif 1 signature appears at 102–107 (RSSSLA). The segment covering 180 to 193 (LAASGLSLALASEE) has biased composition (low complexity). The segment covering 196 to 209 (PELPSTPSPVPSPV) has biased composition (pro residues). Residues 210–234 (LSPTQEQALAPASTASGAASVGQTS) show a composition bias toward low complexity. A compositionally biased stretch (polar residues) spans 256-273 (PAQTSGPTGSPPCIQTSP). Phosphoserine is present on residues serine 291 and serine 324. The span at 337–347 (VPPPLPKPPRS) shows a compositional bias: pro residues. The SH3-binding signature appears at 345–350 (PRSPSR). 2 stretches are compositionally biased toward low complexity: residues 348–360 (PSRS…NRSP) and 398–409 (TTSSSTSTLSSS). An RSXSXX motif 2 motif is present at residues 350-355 (RSPSHS). A catalytic region spans residues 425 to 728 (ITVVTWNVGT…SDHKPVAAQF (304 aa)). The tract at residues 729–840 (LLQFAFRDDM…IGITEPFQIS (112 aa)) is required for ruffle localization. Residues 844–858 (SELASSSTDSSGTSS) show a composition bias toward low complexity. Residues 844 to 1006 (SELASSSTDS…RGLEEGGLGP (163 aa)) form a disordered region. 2 short sequence motifs (RSXSXX motif) span residues 874 to 879 (RSPSPG) and 885 to 890 (RSRSPG). At serine 903 the chain carries Phosphoserine. The short motif at 911-916 (RSPSPQ) is the RSXSXX motif 5 element. Residues 927 to 946 (RSSNGSSRGSSEEGPSGLPG) are compositionally biased toward low complexity. Serine 990 carries the post-translational modification Phosphoserine.

It belongs to the inositol 1,4,5-trisphosphate 5-phosphatase type II family.

Its subcellular location is the cytoplasm. The enzyme catalyses 1D-myo-inositol 1,4,5-trisphosphate + H2O = 1D-myo-inositol 1,4-bisphosphate + phosphate. It catalyses the reaction 1D-myo-inositol 1,3,4,5-tetrakisphosphate + H2O = 1D-myo-inositol 1,3,4-trisphosphate + phosphate. It carries out the reaction a 1,2-diacyl-sn-glycero-3-phospho-(1D-myo-inositol-4,5-bisphosphate) + H2O = a 1,2-diacyl-sn-glycero-3-phospho-(1D-myo-inositol 4-phosphate) + phosphate. Its function is as follows. Inositol 5-phosphatase, which converts inositol 1,4,5-trisphosphate to inositol 1,4-bisphosphate. Also converts phosphatidylinositol 4,5-bisphosphate to phosphatidylinositol 4-phosphate and inositol 1,3,4,5-tetrakisphosphate to inositol 1,3,4-trisphosphate in vitro. May be involved in modulation of the function of inositol and phosphatidylinositol polyphosphate-binding proteins that are present at membranes ruffles. The chain is Phosphatidylinositol 4,5-bisphosphate 5-phosphatase A (INPP5J) from Homo sapiens (Human).